The chain runs to 430 residues: Adenylosuccinate synthetase (430 aa).

Residues 12 to 18 and 40 to 42 contribute to the GTP site; these read GDEGKGK and GHT. The Proton acceptor role is filled by Asp13. 2 residues coordinate Mg(2+): Asp13 and Gly40. IMP is bound by residues 13 to 16, 38 to 41, Thr130, Arg144, Gln224, Thr239, and Arg303; these read DEGK and NAGH. The Proton donor role is filled by His41. 299-305 serves as a coordination point for substrate; the sequence is TVTGRKR. GTP-binding positions include Arg305, 331 to 333, and 413 to 415; these read KLD and STS.

Belongs to the adenylosuccinate synthetase family. In terms of assembly, homodimer. Mg(2+) is required as a cofactor.

The protein localises to the cytoplasm. The catalysed reaction is IMP + L-aspartate + GTP = N(6)-(1,2-dicarboxyethyl)-AMP + GDP + phosphate + 2 H(+). It participates in purine metabolism; AMP biosynthesis via de novo pathway; AMP from IMP: step 1/2. In terms of biological role, plays an important role in the de novo pathway of purine nucleotide biosynthesis. Catalyzes the first committed step in the biosynthesis of AMP from IMP. This chain is Adenylosuccinate synthetase, found in Cereibacter sphaeroides (strain KD131 / KCTC 12085) (Rhodobacter sphaeroides).